Here is a 264-residue protein sequence, read N- to C-terminus: Tryptophan synthase alpha chain (264 aa).

Active-site proton acceptor residues include Glu-44 and Asp-55.

Belongs to the TrpA family. Tetramer of two alpha and two beta chains.

The catalysed reaction is (1S,2R)-1-C-(indol-3-yl)glycerol 3-phosphate + L-serine = D-glyceraldehyde 3-phosphate + L-tryptophan + H2O. It functions in the pathway amino-acid biosynthesis; L-tryptophan biosynthesis; L-tryptophan from chorismate: step 5/5. Functionally, the alpha subunit is responsible for the aldol cleavage of indoleglycerol phosphate to indole and glyceraldehyde 3-phosphate. The chain is Tryptophan synthase alpha chain from Lactiplantibacillus plantarum (strain ATCC BAA-793 / NCIMB 8826 / WCFS1) (Lactobacillus plantarum).